Consider the following 309-residue polypeptide: Protein phosphatase 1 regulatory subunit 42 (309 aa).

LRR repeat units lie at residues 29-50, 51-72, 73-94, 95-116, 117-138, 147-168, and 169-190; these read KITHINFSDKNIDAIEDLSLCK, NLSVLYLYDNCISQITNLNYAT, NLTHLYLQNNCISCIENLRSLK, KLEKLYLGGNYIAVIEGLEGLG, ELRELHVENQRLPLGEKLLFDP, SLCILNISNNNIDDITDLELLE, and NLNQLIAVDNQLLHVKDLEFLL. The region spanning 204–242 is the LRRCT domain; sequence NPVCLKPKYRDRLILVSKSLEFLDGKEIKNIERQFLMNW.

As to quaternary structure, interacts with PPP1CC isoform gamma-2; the interaction is direct. Interacts with actin, dynein, KIF5B, KIFC1 and tubulin. Associates with microtubules. Phosphorylated; in the testis.

The protein resides in the cytoplasm. Its subcellular location is the cytoskeleton. The protein localises to the microtubule organizing center. It is found in the centrosome. In terms of biological role, regulates phosphatase activity of protein phosphatase 1 (PP1) complexes in the testis. This is Protein phosphatase 1 regulatory subunit 42 from Homo sapiens (Human).